We begin with the raw amino-acid sequence, 271 residues long: MKKMILIAGPCVIESKDLIFKVAEQLKNFNENPNIEFYFKSSFDKANRTSINSFRGPGLEEGLKILQSVKDEFGMKILTDIHESNQANPVSEVADVLQIPAFLCRQTDLLVAAAKTKAKINIKKGQFLNPSDIKYSVKKVLQTRGIEDEGYEAAQRNGVFVAERGASFGYGNLVVDMRSLVIMREFAPVIFDATHSVQMPGAAGGSSGGKSEFVEPLARAAAAVGIDGFFFETHINPCEALCDGPNMLNLTRLKNCVNTLLEIQNIIKENK.

The protein belongs to the KdsA family.

Its subcellular location is the cytoplasm. It carries out the reaction D-arabinose 5-phosphate + phosphoenolpyruvate + H2O = 3-deoxy-alpha-D-manno-2-octulosonate-8-phosphate + phosphate. The protein operates within carbohydrate biosynthesis; 3-deoxy-D-manno-octulosonate biosynthesis; 3-deoxy-D-manno-octulosonate from D-ribulose 5-phosphate: step 2/3. It functions in the pathway bacterial outer membrane biogenesis; lipopolysaccharide biosynthesis. This Campylobacter jejuni subsp. jejuni serotype O:2 (strain ATCC 700819 / NCTC 11168) protein is 2-dehydro-3-deoxyphosphooctonate aldolase.